The following is a 79-amino-acid chain: MSDIGERVKKIVVEHLGVEPEKVVDAASFIDDLGADSLDTVELVMAFEEEFGCEIPDDAAETILTVGDATKFLEKNAKS.

Residues 2–77 (SDIGERVKKI…DATKFLEKNA (76 aa)) enclose the Carrier domain. S37 is subject to O-(pantetheine 4'-phosphoryl)serine.

The protein belongs to the acyl carrier protein (ACP) family. Post-translationally, 4'-phosphopantetheine is transferred from CoA to a specific serine of apo-ACP by AcpS. This modification is essential for activity because fatty acids are bound in thioester linkage to the sulfhydryl of the prosthetic group.

Its subcellular location is the cytoplasm. It functions in the pathway lipid metabolism; fatty acid biosynthesis. In terms of biological role, carrier of the growing fatty acid chain in fatty acid biosynthesis. This Bradyrhizobium diazoefficiens (strain JCM 10833 / BCRC 13528 / IAM 13628 / NBRC 14792 / USDA 110) protein is Acyl carrier protein.